A 295-amino-acid polypeptide reads, in one-letter code: Spermatogenesis-associated protein 4 (295 aa).

The segment at Met-1 to Lys-34 is disordered. Positions Ser-48–Gln-154 constitute a Calponin-homology (CH) domain. The segment at Lys-251 to Leu-295 is disordered. The segment covering Ser-270–Val-282 has biased composition (basic and acidic residues). Positions Gln-284 to Leu-295 are enriched in polar residues.

As to expression, testis.

It localises to the nucleus. In terms of biological role, may play a role in apoptosis regulation. This chain is Spermatogenesis-associated protein 4 (Spata4), found in Mus musculus (Mouse).